The chain runs to 131 residues: MAAAANLPAFLAVGAGAALGAWLRWALGLLLNPIFLTIPFGTLAANLLGGLLMGASLAWIHAVPAMSPVLKLLLTTGFLGGLTTFSTFSAEGLHLVQRGEWGWLALHAAVHVAGSLLMAWIGYAAFTAWRG.

3 consecutive transmembrane segments (helical) span residues 3 to 23 (AAANLPAFLAVGAGAALGAWL), 34 to 54 (IFLTIPFGTLAANLLGGLLMG), and 62 to 82 (AVPAMSPVLKLLLTTGFLGGL). 2 residues coordinate Na(+): G80 and T83. A helical transmembrane segment spans residues 101–121 (WGWLALHAAVHVAGSLLMAWI).

It belongs to the fluoride channel Fluc/FEX (TC 1.A.43) family.

It localises to the cell inner membrane. The catalysed reaction is fluoride(in) = fluoride(out). With respect to regulation, na(+) is not transported, but it plays an essential structural role and its presence is essential for fluoride channel function. In terms of biological role, fluoride-specific ion channel. Important for reducing fluoride concentration in the cell, thus reducing its toxicity. This chain is Fluoride-specific ion channel FluC, found in Aromatoleum aromaticum (strain DSM 19018 / LMG 30748 / EbN1) (Azoarcus sp. (strain EbN1)).